A 422-amino-acid chain; its full sequence is Beta-1,3-galactosyltransferase 2 (422 aa).

Topologically, residues 1 to 24 are cytoplasmic; the sequence is MLQWRRRHCCFAKMTWNAKRSLFR. Residues 25-45 form a helical; Signal-anchor for type II membrane protein membrane-spanning segment; sequence THLIGVLSLVFLFAMFLFFNH. Over 46–422 the chain is Lumenal; the sequence is HDWLPGRAGF…AGRYRHRKLH (377 aa). Residues N75, N100, N119, N176, and N226 are each glycosylated (N-linked (GlcNAc...) asparagine). The interval 90-110 is disordered; that stretch reads TLRPQTATNSNNTDLSPQGVT.

It belongs to the glycosyltransferase 31 family. Requires Mn(2+) as cofactor. Detected in heart and brain.

Its subcellular location is the golgi apparatus membrane. It catalyses the reaction an N-acetyl-beta-D-glucosaminyl derivative + UDP-alpha-D-galactose = a beta-D-galactosyl-(1-&gt;3)-N-acetyl-beta-D-glucosaminyl derivative + UDP + H(+). The enzyme catalyses a beta-D-GlcNAc-(1-&gt;3)-beta-D-Gal-(1-&gt;4)-beta-D-Glc-(1&lt;-&gt;1)-Cer(d18:1(4E)) + UDP-alpha-D-galactose = a beta-D-Gal-(1-&gt;3)-beta-D-GlcNAc-(1-&gt;3)-beta-D-Gal-(1-&gt;4)-beta-D-Glc-(1&lt;-&gt;1')-Cer(d18:1(4E)) + UDP + H(+). It carries out the reaction a neolactoside IV(3)-beta-GlcNAc-nLc4Cer(d18:1(4E)) + UDP-alpha-D-galactose = a neolactoside IV(3)-beta-[Gal-beta-(1-&gt;3)-GlcNAc]-nLc4Cer(d18:1(4E)) + UDP + H(+). Its pathway is protein modification; protein glycosylation. Its function is as follows. Beta-1,3-galactosyltransferase that transfers galactose from UDP-galactose to substrates with a terminal beta-N-acetylglucosamine (beta-GlcNAc) residue. Can also utilize substrates with a terminal galactose residue, albeit with lower efficiency. Involved in the biosynthesis of the carbohydrate moieties of glycolipids and glycoproteins. Inactive towards substrates with terminal alpha-N-acetylglucosamine (alpha-GlcNAc) or alpha-N-acetylgalactosamine (alpha-GalNAc) residues. This is Beta-1,3-galactosyltransferase 2 from Homo sapiens (Human).